The chain runs to 125 residues: Large ribosomal subunit protein bL19 (125 aa).

This sequence belongs to the bacterial ribosomal protein bL19 family.

Functionally, this protein is located at the 30S-50S ribosomal subunit interface and may play a role in the structure and function of the aminoacyl-tRNA binding site. The polypeptide is Large ribosomal subunit protein bL19 (Wolbachia pipientis wMel).